The sequence spans 313 residues: Mas-related G-protein coupled receptor member A4 (313 aa).

The Extracellular segment spans residues 1–25 (MAPTTTNPMNETIPGSIDIETLIPN). A glycan (N-linked (GlcNAc...) asparagine) is linked at asparagine 10. The chain crosses the membrane as a helical span at residues 26-46 (LMIIIFGLVGLTGNVILFWLL). Residues 47–54 (GFHLHRNA) lie on the Cytoplasmic side of the membrane. Residues 55 to 75 (FLVYILNLALADFLFLLCHII) traverse the membrane as a helical segment. N-linked (GlcNAc...) asparagine glycosylation is present at asparagine 76. Residues 76–93 (NSTMLLLKVHLPNNILNH) lie on the Extracellular side of the membrane. The helical transmembrane segment at 94-114 (CFDIIMTVLYITGLSMLSAIS) threads the bilayer. The Cytoplasmic portion of the chain corresponds to 115-137 (TERCLSVLCPIWYRCRRPEHTST). Residues 138–158 (VLCAVIWFLPLLICILNGYFC) traverse the membrane as a helical segment. The Extracellular segment spans residues 159 to 182 (HFFGPKYVIDSVCLATNFFIRTYP). The helical transmembrane segment at 183-203 (MFLFIVLCLSTLALLARLFCG) threads the bilayer. Residues 204-219 (AGKTKFTRLFVTIMLT) are Cytoplasmic-facing. The chain crosses the membrane as a helical span at residues 220 to 240 (VLVFLLCGLPLGFFWFLVPWI). The Extracellular segment spans residues 241-255 (NRDFSVLDYILFQTS). Residues 256 to 276 (LVLTSVNSCANPIIYFFVGSF) form a helical membrane-spanning segment. Residues 277–313 (RHRLKHKTLKMVLQSALQDTPETPENMVEMSRSKAEP) lie on the Cytoplasmic side of the membrane.

The protein belongs to the G-protein coupled receptor 1 family. Mas subfamily. As to expression, expressed in a subset of sensory neurons that includes nociceptors. Expressed in the subclass of non-peptidergic sensory neurons that are IB4(+) and VR1(-).

The protein localises to the cell membrane. Orphan receptor. May be a receptor for RFamide-family neuropeptides such as NPFF and NPAF, which are analgesic in vivo. May regulate nociceptor function and/or development, including the sensation or modulation of pain. This Mus musculus (Mouse) protein is Mas-related G-protein coupled receptor member A4 (Mrgpra4).